Here is a 431-residue protein sequence, read N- to C-terminus: Argininosuccinate lyase (431 aa).

The protein belongs to the lyase 1 family. Argininosuccinate lyase subfamily.

It localises to the cytoplasm. The enzyme catalyses 2-(N(omega)-L-arginino)succinate = fumarate + L-arginine. The protein operates within amino-acid biosynthesis; L-arginine biosynthesis; L-arginine from L-ornithine and carbamoyl phosphate: step 3/3. The sequence is that of Argininosuccinate lyase from Xanthomonas campestris pv. campestris (strain B100).